The chain runs to 310 residues: MSQAIVVAALYKFVTLEDYIELREPLLQAMLDNNVKGTLLLAHEGINGTVSATREGIDGLLAWLRNDPRLVDVDHKESYCDEQPFYRTKVKLKKEIVTLGVPGVDPNQAVGTYVEPKDWNALISDPEVLLIDTRNDYEVAIGTFKGAIDPKTETFREFPEYIKANFDPSKHKKVAMFCTGGIRCEKASSYMLGEGFDAVYHLKGGILKYFEEVPQEESLWDGDCFVFDNRVTVRHDLSEGEYDQCHACRHPINAQERASEHYSPGVSCPHCWDTLSEKTRRSAIDRQKQIELAKARNLPHPIGYNYKAEA.

The 95-residue stretch at 124–218 (SDPEVLLIDT…YFEEVPQEES (95 aa)) folds into the Rhodanese domain. Residue C178 is the Cysteine persulfide intermediate of the active site.

Belongs to the TrhO family.

The catalysed reaction is uridine(34) in tRNA + AH2 + O2 = 5-hydroxyuridine(34) in tRNA + A + H2O. Functionally, catalyzes oxygen-dependent 5-hydroxyuridine (ho5U) modification at position 34 in tRNAs. In Pseudomonas putida (strain GB-1), this protein is tRNA uridine(34) hydroxylase.